The following is a 77-amino-acid chain: Mu-conotoxin BuIIIA (77 aa).

The first 22 residues, 1-22, serve as a signal peptide directing secretion; it reads MMSKLGVLLTICLLLFPLFALP. The propeptide occupies 23 to 51; it reads QDGDQPADRPAERMQDDISSEQNSLLEKR. Positions 26–46 are disordered; that stretch reads DQPADRPAERMQDDISSEQNS. The span at 28–38 shows a compositional bias: basic and acidic residues; it reads PADRPAERMQD. 3 disulfide bridges follow: Cys-56-Cys-67, Cys-57-Cys-73, and Cys-63-Cys-74. Cys-74 carries the post-translational modification Cysteine amide.

Belongs to the conotoxin M superfamily. As to expression, expressed by the venom duct.

Its subcellular location is the secreted. Its function is as follows. Mu-conotoxins block voltage-gated sodium channels (Nav). This synthetic toxin potently blocks rNav1.2/SCN2A, and rNav1.4/SCN4A. It also moderately blocks rNav1.1/SCN1A, rNav1.3/SCN3A, rNav1.5/SCN5A, and mNav1.6/SCN8A. The inhibition is reversible. In Conus bullatus (Bubble cone), this protein is Mu-conotoxin BuIIIA.